The sequence spans 145 residues: Small ribosomal subunit protein eS19 (145 aa).

This sequence belongs to the eukaryotic ribosomal protein eS19 family. Part of the 30S ribosomal subunit.

May be involved in maturation of the 30S ribosomal subunit. In Methanothermobacter thermautotrophicus (strain ATCC 29096 / DSM 1053 / JCM 10044 / NBRC 100330 / Delta H) (Methanobacterium thermoautotrophicum), this protein is Small ribosomal subunit protein eS19.